The following is a 540-amino-acid chain: 2,3-bisphosphoglycerate-independent phosphoglycerate mutase (540 aa).

Aspartate 25 and serine 75 together coordinate Mn(2+). The Phosphoserine intermediate role is filled by serine 75. Substrate contacts are provided by residues histidine 136, 166-167, arginine 198, arginine 204, 269-272, and lysine 342; these read RD and RPDR. Positions 409, 413, 450, 451, and 468 each coordinate Mn(2+).

It belongs to the BPG-independent phosphoglycerate mutase family. As to quaternary structure, monomer. Mn(2+) serves as cofactor.

The enzyme catalyses (2R)-2-phosphoglycerate = (2R)-3-phosphoglycerate. Its pathway is carbohydrate degradation; glycolysis; pyruvate from D-glyceraldehyde 3-phosphate: step 3/5. Its function is as follows. Catalyzes the interconversion of 2-phosphoglycerate and 3-phosphoglycerate. The protein is 2,3-bisphosphoglycerate-independent phosphoglycerate mutase of Prochlorococcus marinus subsp. pastoris (strain CCMP1986 / NIES-2087 / MED4).